Here is a 509-residue protein sequence, read N- to C-terminus: MNEQQRLASQQVNSSTKKEEKDYSKYFESVYQPPSLKDAKKRGKEEVKIERDFGLPEEFRNFGTGRKFYIRTYGCQMNEHDTEVMAGIFTALGYEPTFSTEDADVVLLNTCAIRENAENKVFGELGHLKSLKRRNPDLLIGVCGCMSQEESVVNKIMQKNQHVDMVFGTHNIHRLPYILKDAMFSKETVVEVWSKEGDVIENLPKVRRGDIKAWVNIMYGCDKFCTYCIVPYTRGKERSRRPEDIIQEIRHLAANGYKEITLLGQNVNAYGKDFEDIEYGLGDLMDELRKVDIARIRFTTSHPRDFDDHLIEVLGKGGNLVEHIHLPVQSGSTEMLKIMARKYSREHYLELVRKIKEAIPNAVLTTDIIVGFPNETDEQFEETMSLYREVGFDTAFTFIYSPREGTPAAKMKDNVPMEVKKERLQRLNALVNKLAIEKNDRYKGQIVEVLVDGESKNNPEVLAGYTRTNKLVNFVAPKSLIGQLVKVKVTDAKTWSLNGELVEEPIEVE.

The span at 1–15 (MNEQQRLASQQVNSS) shows a compositional bias: polar residues. The tract at residues 1–26 (MNEQQRLASQQVNSSTKKEEKDYSKY) is disordered. Positions 16 to 25 (TKKEEKDYSK) are enriched in basic and acidic residues. In terms of domain architecture, MTTase N-terminal spans 66–184 (RKFYIRTYGC…LPYILKDAMF (119 aa)). Residues Cys75, Cys111, Cys145, Cys221, Cys225, and Cys228 each contribute to the [4Fe-4S] cluster site. The 231-residue stretch at 207 to 437 (RRGDIKAWVN…NALVNKLAIE (231 aa)) folds into the Radical SAM core domain. Residues 440–503 (DRYKGQIVEV…TWSLNGELVE (64 aa)) form the TRAM domain.

Belongs to the methylthiotransferase family. MiaB subfamily. Monomer. The cofactor is [4Fe-4S] cluster.

It is found in the cytoplasm. The enzyme catalyses N(6)-dimethylallyladenosine(37) in tRNA + (sulfur carrier)-SH + AH2 + 2 S-adenosyl-L-methionine = 2-methylsulfanyl-N(6)-dimethylallyladenosine(37) in tRNA + (sulfur carrier)-H + 5'-deoxyadenosine + L-methionine + A + S-adenosyl-L-homocysteine + 2 H(+). Functionally, catalyzes the methylthiolation of N6-(dimethylallyl)adenosine (i(6)A), leading to the formation of 2-methylthio-N6-(dimethylallyl)adenosine (ms(2)i(6)A) at position 37 in tRNAs that read codons beginning with uridine. In Bacillus thuringiensis (strain Al Hakam), this protein is tRNA-2-methylthio-N(6)-dimethylallyladenosine synthase.